We begin with the raw amino-acid sequence, 167 residues long: uncharacterized protein (167 aa).

It belongs to the A.longa ORF167/ORF288 family.

It is found in the plastid. This is an uncharacterized protein from Euglena longa (Euglenophycean alga).